The primary structure comprises 487 residues: Transcription factor GTE5, chloroplastic (487 aa).

A chloroplast-targeting transit peptide spans 1 to 32 (MSSEHISGGGASKTKKHKWSSSQNRPKPMGVS). Disordered regions lie at residues 1–48 (MSSE…NSFA), 93–127 (ANPG…GADK), and 400–487 (KNEA…DNGN). In terms of domain architecture, Bromo spans 127 to 233 (KGTVQIFKNC…NMFEDKWVSI (107 aa)). The NET domain maps to 320 to 401 (EEEAPVNNRD…GYKESLSKKN (82 aa)). Basic and acidic residues predominate over residues 400–414 (KNEAHGFGSERDAES). The span at 415-435 (VHNSIQEPTTLVSGTTTSRVT) shows a compositional bias: polar residues. The segment covering 451–487 (NNASGSSSSNSSSSDSGSCSSDTDSDSSSGRGSDNGN) has biased composition (low complexity).

As to quaternary structure, interacts with SIZ1 (via PHD domain). Post-translationally, sumoylated by SIZ1.

It is found in the plastid. The protein resides in the chloroplast. The sequence is that of Transcription factor GTE5, chloroplastic (GTE5) from Arabidopsis thaliana (Mouse-ear cress).